A 156-amino-acid chain; its full sequence is MSKLQFVWVGKLKEPFFRDACAHYTKKLGRFHKLDETILKDAPGKLPPMDKVQHEGKAIMARIKPSDMLICLDEKGKEMTSVELSKHLQRWTEDPNLTPTFVIGGPFGLADEVKNAARVKLSLSKMTLPHELARTMLLEQLYRAASILRGSPYHHV.

Residues L72, G104, and L123–L128 each bind S-adenosyl-L-methionine.

It belongs to the RNA methyltransferase RlmH family. In terms of assembly, homodimer.

It localises to the cytoplasm. The catalysed reaction is pseudouridine(1915) in 23S rRNA + S-adenosyl-L-methionine = N(3)-methylpseudouridine(1915) in 23S rRNA + S-adenosyl-L-homocysteine + H(+). In terms of biological role, specifically methylates the pseudouridine at position 1915 (m3Psi1915) in 23S rRNA. The polypeptide is Ribosomal RNA large subunit methyltransferase H (Maridesulfovibrio salexigens (strain ATCC 14822 / DSM 2638 / NCIMB 8403 / VKM B-1763) (Desulfovibrio salexigens)).